Here is a 198-residue protein sequence, read N- to C-terminus: Protein uvp1 (198 aa).

The region spanning 1–140 (MIIGYARKST…SGLAAARARG (140 aa)) is the Resolvase/invertase-type recombinase catalytic domain. Serine 9 serves as the catalytic O-(5'-phospho-DNA)-serine intermediate. The H-T-H motif DNA-binding region spans 168–187 (VGAVAKRFNVSRMTIYRYTT).

This sequence belongs to the site-specific recombinase resolvase family.

Functionally, cooperates with the mucAB genes in the DNA repair process. Could be a resolvase-invertase protein. The sequence is that of Protein uvp1 (uvp1) from Escherichia coli.